Consider the following 238-residue polypeptide: Zwei Ig domain protein zig-2 (238 aa).

Residues 1–17 (MLKFTAISFVLLNAAES) form the signal peptide. The region spanning 31–130 (PLLKFTRTPN…NGLTKLEHVA (100 aa)) is the Ig-like C2-type 1 domain. N-linked (GlcNAc...) asparagine glycosylation is found at asparagine 40 and asparagine 43. Cysteine 54 and cysteine 117 are joined by a disulfide. Residues asparagine 137, asparagine 206, and asparagine 216 are each glycosylated (N-linked (GlcNAc...) asparagine). The region spanning 149 to 230 (PFISMTVDFR…NHFGETTAIT (82 aa)) is the Ig-like C2-type 2 domain. Cysteine 170 and cysteine 217 form a disulfide bridge.

In terms of tissue distribution, expressed in PVT neurons and weakly in some head neurons.

The protein localises to the secreted. In terms of biological role, probably not involved in maintaining the position of ASI and ASH head neuron cell bodies and ventral nerve cord axons of PVQ, PVP, RMEV, AVK and HSN neurons. The protein is Zwei Ig domain protein zig-2 of Caenorhabditis elegans.